A 436-amino-acid polypeptide reads, in one-letter code: 3-ketoacyl-CoA thiolase (436 aa).

Cys99 functions as the Acyl-thioester intermediate in the catalytic mechanism. Residues His392 and Cys422 each act as proton acceptor in the active site.

It belongs to the thiolase-like superfamily. Thiolase family. As to quaternary structure, heterotetramer of two alpha chains (FadJ) and two beta chains (FadI).

Its subcellular location is the cytoplasm. The catalysed reaction is an acyl-CoA + acetyl-CoA = a 3-oxoacyl-CoA + CoA. Its pathway is lipid metabolism; fatty acid beta-oxidation. Catalyzes the final step of fatty acid oxidation in which acetyl-CoA is released and the CoA ester of a fatty acid two carbons shorter is formed. This is 3-ketoacyl-CoA thiolase from Escherichia coli O1:K1 / APEC.